Consider the following 339-residue polypeptide: Enhancer of mRNA-decapping protein 1 (339 aa).

Disordered stretches follow at residues 1–240 and 309–339; these read MMMH…PPRY and FPVN…SAKK. The span at 13–25 shows a compositional bias: polar residues; that stretch reads SPGSENHSNPASR. Basic and acidic residues-rich tracts occupy residues 26–38 and 91–100; these read EQSK…ERRL and DNKEKNKKLL. The segment covering 111-131 has biased composition (low complexity); it reads NFSFYSESNSNSNSNVSSNSN. The span at 163 to 173 shows a compositional bias: basic and acidic residues; sequence RPDKNGKKGPV. Residues 196–212 show a composition bias toward polar residues; it reads FQRTSPKQQANTINDEN. The span at 213–237 shows a compositional bias: low complexity; it reads SSPSSSASSVSMSSPRPVAGAVAAP.

The protein belongs to the EDC family.

It is found in the cytoplasm. In terms of biological role, mRNA-binding protein which stimulates mRNA decapping. This chain is Enhancer of mRNA-decapping protein 1 (EDC1), found in Scheffersomyces stipitis (strain ATCC 58785 / CBS 6054 / NBRC 10063 / NRRL Y-11545) (Yeast).